The sequence spans 539 residues: 4-coumarate--CoA ligase 5 (539 aa).

6 residues coordinate ATP: S185, S186, G187, T188, T189, and K193. (E)-4-coumaroyl-AMP is bound by residues Y235 and S239. R256 is a CoA binding site. The tract at residues 258-327 (DTVKMLQLVE…AKLPNAVLGQ (70 aa)) is SBD1. Positions 305, 327, 328, 332, and 340 each coordinate (E)-4-coumaroyl-AMP. ATP is bound by residues Q327, G328, and T332. The SBD2 stretch occupies residues 328–395 (GYGMTEAGPV…IRGKQIMKGY (68 aa)). ATP contacts are provided by D416 and R431. 2 residues coordinate (E)-4-coumaroyl-AMP: K433 and K437. The CoA site is built by K439 and G440. K522 is an ATP binding site.

This sequence belongs to the ATP-dependent AMP-binding enzyme family. Requires Mg(2+) as cofactor. Expressed in roots, stems, leaf blades, leaf sheaths and spikelets.

It carries out the reaction (E)-ferulate + ATP + CoA = (E)-feruloyl-CoA + AMP + diphosphate. The catalysed reaction is (E)-4-coumarate + ATP + CoA = (E)-4-coumaroyl-CoA + AMP + diphosphate. The enzyme catalyses (E)-sinapate + ATP + CoA = (E)-sinapoyl-CoA + AMP + diphosphate. It catalyses the reaction (E)-caffeate + ATP + CoA = (E)-caffeoyl-CoA + AMP + diphosphate. It carries out the reaction (E)-cinnamate + ATP + CoA = (E)-cinnamoyl-CoA + AMP + diphosphate. The catalysed reaction is (E)-ferulate + ATP + H(+) = (E)-feruloyl-AMP + diphosphate. The enzyme catalyses (E)-feruloyl-AMP + CoA = (E)-feruloyl-CoA + AMP + H(+). It catalyses the reaction (E)-4-coumarate + ATP + H(+) = (E)-4-coumaroyl-AMP + diphosphate. It carries out the reaction (E)-4-coumaroyl-AMP + CoA = (E)-4-coumaroyl-CoA + AMP + H(+). The catalysed reaction is (E)-sinapate + ATP + H(+) = (E)-sinapoyl-AMP + diphosphate. The enzyme catalyses (E)-sinapoyl-AMP + CoA = (E)-sinapoyl-CoA + AMP + H(+). It catalyses the reaction (E)-caffeate + ATP + H(+) = (E)-caffeoyl-AMP + diphosphate. It carries out the reaction (E)-caffeoyl-AMP + CoA = (E)-caffeoyl-CoA + AMP + H(+). It participates in phytoalexin biosynthesis; 3,4',5-trihydroxystilbene biosynthesis; 3,4',5-trihydroxystilbene from trans-4-coumarate: step 1/2. Involved in the phenylpropanoid metabolism by mediating the activation of a number of hydroxycinnamates for the biosynthesis of monolignols and other phenolic secondary metabolites. Catalyzes the formation of CoA esters of cinnamate, 4-coumarate, caffeate and ferulate. Is also able to convert sinapate to its corresponding CoA ester, a reaction that is rarely observed in 4CL catalysis. Is more efficient with substrates in the following order: ferulate &gt; 4-coumarate &gt; sinapate &gt; caffeate &gt; cinnamate. Follows a two-step reaction mechanism, wherein the carboxylate substrate first undergoes adenylation by ATP, followed by a thioesterification in the presence of CoA to yield the final CoA thioesters. This Oryza sativa subsp. japonica (Rice) protein is 4-coumarate--CoA ligase 5.